We begin with the raw amino-acid sequence, 437 residues long: GTPase Der (437 aa).

2 EngA-type G domains span residues proline 3 to glutamate 168 and valine 178 to serine 353. Residues glycine 9 to serine 16, aspartate 56 to tyrosine 60, asparagine 120 to glutamate 123, glycine 184 to serine 191, aspartate 231 to leucine 235, and asparagine 296 to aspartate 299 each bind GTP. Residues arginine 354 to lysine 437 enclose the KH-like domain.

This sequence belongs to the TRAFAC class TrmE-Era-EngA-EngB-Septin-like GTPase superfamily. EngA (Der) GTPase family. Associates with the 50S ribosomal subunit.

In terms of biological role, GTPase that plays an essential role in the late steps of ribosome biogenesis. In Chlorobium limicola (strain DSM 245 / NBRC 103803 / 6330), this protein is GTPase Der.